Consider the following 560-residue polypeptide: Nuclear receptor subfamily 5 group A member 2 (560 aa).

Residues I21–P55 are disordered. Residues E28 to D48 are compositionally biased toward basic and acidic residues. The nuclear receptor DNA-binding region spans E104–E175. Residues C107, C110, C124, C127, C143, C149, C159, and C162 each coordinate Zn(2+). 2 consecutive NR C4-type zinc fingers follow at residues C107 to C127 and C143 to C167. A C-terminal extension (CTE) region spans residues K173–K188. An FTZ-F1 box motif is present at residues F189–R208. Residue K289 forms a Glycyl lysine isopeptide (Lys-Gly) (interchain with G-Cter in SUMO1) linkage. In terms of domain architecture, NR LBD spans S319–K558. Residues Y535 and K539 each contribute to the a phospholipid derivative site. The segment at Y547 to K558 is AF-2.

This sequence belongs to the nuclear hormone receptor family. NR5 subfamily. As to quaternary structure, monomer; Binds DNA as a monomer. Interacts with nuclear receptor corepressors NR0B1 and NR0B2; repressing NR5A2 nuclear receptor activity. Interacts with nuclear receptor coactivators CTNNB1, PPARGC1A and NCOA2; interaction takes place following ligand-binding and promotes target gene activation. Interacts (when sumoylated) with GPS2; interaction with GPS2 onto hepatic acute phase protein promoters prevents N-Cor corepressor complex dissociation. Interacts with HNF1A. Interacts with GRIP1. Sumoylated by SUMO1 at Lys-289 during the hepatic acute phase response, leading to promote interaction with GPS2 and prevent N-Cor corepressor complex dissociation.

Its subcellular location is the nucleus. The protein resides in the chromosome. Functionally, orphan nuclear receptor that binds DNA as a monomer to the 5'-TCAAGGCCA-3' sequence and controls expression of target genes: regulates key biological processes, such as early embryonic development, cholesterol and bile acid synthesis pathways, as well as liver and pancreas morphogenesis. Ligand-binding causes conformational change which causes recruitment of coactivators, promoting target gene activation. The specific ligand is unknown, but specific phospholipids, such as phosphatidylethanolamine, phosphatidylserine, dilauroyl phosphatidylcholine and diundecanoyl phosphatidylcholine can act as ligand in vitro. Acts as a pioneer transcription factor, which unwraps target DNA from histones and elicits local opening of closed chromatin. Plays a central role during preimplantation stages of embryonic development. Plays a minor role in zygotic genome activation (ZGA) by regulating a small set of two-cell stage genes. Plays a major role in morula development (2-16 cells embryos) by acting as a master regulator at the 8-cell stage, controlling expression of lineage-specifying transcription factors and genes involved in mitosis, telomere maintenance and DNA repair. Zygotic NR5A2 binds to both closed and open chromatin with other transcription factors, often at SINE B1/Alu repeats DNA elements, promoting chromatin accessibility at nearby regulatory regions. Also involved in the epiblast stage of development and embryonic stem cell pluripotency, by promoting expression of POU5F1/OCT4. Regulates other processes later in development, such as formation of connective tissue in lower jaw and middle ear, neural stem cell differentiation, ovarian follicle development and Sertoli cell differentiation. Involved in exocrine pancreas development and acinar cell differentiation. Acts as an essential transcriptional regulator of lipid metabolism. Key regulator of cholesterol 7-alpha-hydroxylase gene (CYP7A) expression in liver. Activates the transcription of CYP2C38. Also acts as a negative regulator of inflammation in different organs, such as intestine, liver and pancreas. Protects against intestinal inflammation via its ability to regulate glucocorticoid production. Plays an anti-inflammatory role during the hepatic acute phase response by acting as a corepressor: inhibits the hepatic acute phase response by preventing dissociation of the N-Cor corepressor complex. Acts as a regulator of immunity by promoting lymphocyte T-cell development, proliferation and effector functions. Also involved in resolution of endoplasmic reticulum stress in the liver. This is Nuclear receptor subfamily 5 group A member 2 from Mus musculus (Mouse).